Consider the following 227-residue polypeptide: tRNA (guanine-N(1)-)-methyltransferase (227 aa).

S-adenosyl-L-methionine is bound by residues G112 and 132 to 137 (IGDFIL).

It belongs to the RNA methyltransferase TrmD family. Homodimer.

The protein resides in the cytoplasm. The enzyme catalyses guanosine(37) in tRNA + S-adenosyl-L-methionine = N(1)-methylguanosine(37) in tRNA + S-adenosyl-L-homocysteine + H(+). In terms of biological role, specifically methylates guanosine-37 in various tRNAs. The polypeptide is tRNA (guanine-N(1)-)-methyltransferase (Sulfurovum sp. (strain NBC37-1)).